The primary structure comprises 482 residues: 2-succinylbenzoate--CoA ligase (482 aa).

Belongs to the ATP-dependent AMP-binding enzyme family. MenE subfamily.

It carries out the reaction 2-succinylbenzoate + ATP + CoA = 2-succinylbenzoyl-CoA + AMP + diphosphate. It functions in the pathway quinol/quinone metabolism; 1,4-dihydroxy-2-naphthoate biosynthesis; 1,4-dihydroxy-2-naphthoate from chorismate: step 5/7. It participates in quinol/quinone metabolism; menaquinone biosynthesis. Its function is as follows. Converts 2-succinylbenzoate (OSB) to 2-succinylbenzoyl-CoA (OSB-CoA). The protein is 2-succinylbenzoate--CoA ligase of Bacillus cereus (strain ATCC 14579 / DSM 31 / CCUG 7414 / JCM 2152 / NBRC 15305 / NCIMB 9373 / NCTC 2599 / NRRL B-3711).